The chain runs to 125 residues: Holo-[acyl-carrier-protein] synthase (125 aa).

Mg(2+)-binding residues include Asp9 and Glu58.

It belongs to the P-Pant transferase superfamily. AcpS family. The cofactor is Mg(2+).

Its subcellular location is the cytoplasm. The enzyme catalyses apo-[ACP] + CoA = holo-[ACP] + adenosine 3',5'-bisphosphate + H(+). Transfers the 4'-phosphopantetheine moiety from coenzyme A to a Ser of acyl-carrier-protein. The chain is Holo-[acyl-carrier-protein] synthase from Shewanella amazonensis (strain ATCC BAA-1098 / SB2B).